Reading from the N-terminus, the 98-residue chain is Protein S100-A11 (98 aa).

Position 5 is a phosphothreonine (threonine 5). 2 EF-hand domains span residues 8–44 (CIES…ELAA) and 50–85 (KDPG…LAIA). Lysine 22 is subject to N6-acetyllysine. Ca(2+) contacts are provided by asparagine 26, glutamine 28, glutamate 33, aspartate 63, asparagine 65, aspartate 67, glutamine 69, and glutamate 74.

The protein belongs to the S-100 family. Homodimer; disulfide-linked. Phosphorylation at Thr-5 significantly suppresses homodimerization and promotes association with NCL/nucleolin which induces nuclear translocation.

The protein resides in the cytoplasm. It localises to the nucleus. Functionally, facilitates the differentiation and the cornification of keratinocytes. In Mus musculus (Mouse), this protein is Protein S100-A11 (S100a11).